We begin with the raw amino-acid sequence, 635 residues long: Interferon-induced GTP-binding protein Mx2 (635 aa).

One can recognise a Dynamin-type G domain in the interval 31–304 (DLALPAIAVI…LVQHIEKSMP (274 aa)). Residues 41-48 (GDQSSGKS) form a G1 motif region. 41–48 (GDQSSGKS) serves as a coordination point for GTP. The interval 66–68 (VTR) is G2 motif. The tract at residues 142 to 145 (DLPG) is G3 motif. Residues 142–146 (DLPGI) and 211–214 (TKPD) each bind GTP. Positions 211 to 214 (TKPD) are G4 motif. The tract at residues 243–246 (KCRG) is G5 motif. In terms of domain architecture, GED spans 549 to 635 (LREMMLHLKS…MKAHNYLVEF (87 aa)).

This sequence belongs to the TRAFAC class dynamin-like GTPase superfamily. Dynamin/Fzo/YdjA family.

The protein localises to the nucleus. The protein resides in the cytoplasm. Functionally, does not inhibit strain RB-1 of the fish pathogen, infectious hematopoietic necrosis virus (IHNV). This Oncorhynchus mykiss (Rainbow trout) protein is Interferon-induced GTP-binding protein Mx2.